The sequence spans 807 residues: MAAPEAWRARSCWFCEVAAATTMEATSREAAPAKSSASGPSAPPALFELCGRAVSAHMGVLESGVWALPGPILQSILPLLNIYYLERIEETALKKGLSTQAIWRRLWDELMKTRPSSLESVTCWRAKFMEAFFSHVLRGTIDVSSDKRLCDQRFSPLLHSSRHVRQLTICNMLQGATELVAEPNRRVLETLASSLHTLKFRHLLFSDVAAQQSLRQLLHQLIHHGAVSQVSLYSWPVPESALFILILTMSAGFWQPGPGSLPCRLCGEASRGRAPSRDEGSLLLGSRRPRRDAAERCAAALMATRRKSEVKQMPRAVPPTRVTRRSTQESLAIGGTDSKLYLPATSYEASGTKQPSAPAAASASSSTSSKRAPASSASQPKPLKRFKRAAGKKGPRTRQGSGAESEDLYDFVFIVAGEKEDGEEMEIGEVACGALDGSDPSCLGLPALEASQRFRSISTLELFTVPLSTEAALTLCHLLSSWVSLESLTLSYNGLGSNIFRLLDSLRALSGQAGCRLRALHLSDLFSPLPILELTRAIVRALPLLRVLSIRVDHPSQRDNPAVPENAGPPGHIVGDEEIPENCLEQLEMGFPRGAQPAPLLCSVLKASGSLQQLSLDSATFASPQDFGLVLQTLKEHNLSLKRLSFHDMNLADCQSEVLFLLKNLTLQEITFSFCRLFEKRPVQFLPEMVAAMKGNSTLKGLRLPGNRLGNAGLLALADVFSEDSSSSLCQLDISSNCIKPDGLLEFAKRLERWGRGAFGHLRLFQNWLDQDAVTAREAIRRLRATCHVVSDSWDSTQAFADYVSTM.

Residues 45-54 are interaction with Elongin BC complex; sequence ALFELCGRAV. A phosphoserine mark is found at Ser155, Ser276, and Ser326. Disordered stretches follow at residues 269-290, 304-335, and 349-403; these read ASRG…RRPR, TRRK…AIGG, and ASGT…GSGA. Position 327 is a phosphothreonine (Thr327). Residues 352–381 are compositionally biased toward low complexity; sequence TKQPSAPAAASASSSTSSKRAPASSASQPK. Position 368 is a phosphoserine (Ser368). Positions 382–396 are enriched in basic residues; that stretch reads PLKRFKRAAGKKGPR. LRR repeat units follow at residues 482–502, 513–525, 526–550, 608–632, 638–661, 696–723, and 726–747; these read WVSL…IFRL, AGCR…LSDL, FSPL…VLSI, SGSL…LVLQ, NLSL…VLFL, NSTL…VFSE, and SSSL…LLEF.

Part of an E3 ubiquitin-protein ligase complex with Elongin BC (ELOB and ELOC), RBX1 and CUL5. Component of a probable ECS(LRRC41) complex which contains CUL5, RNF7/RBX2, Elongin BC and LRRC41. Interacts with CUL5, RNF7, ELOB and ELOC.

The protein operates within protein modification; protein ubiquitination. In terms of biological role, probable substrate recognition component of an ECS (Elongin BC-CUL2/5-SOCS-box protein) E3 ubiquitin ligase complex which mediates the ubiquitination and subsequent proteasomal degradation of target proteins. The sequence is that of Leucine-rich repeat-containing protein 41 (Lrrc41) from Mus musculus (Mouse).